Here is a 322-residue protein sequence, read N- to C-terminus: MIFSTLEHILTHISFSIVSIVITLHLITLLGNEIIKPYDSSEKGMIATFLCLTGLLITRWIYSGHFPLSDLYESFIFLSWSFSLIHIVPYFKIRKNDLTTITASSTIFTQGFATSGLLNEIHKPTILVPALQSEWLIMHVSMMILSYAALLCGSLLSVALLVITFRNIFYSSKSNNFLKLNESFSFGEIQYKNERNNIFQKTYFFSDKNYYKAQFIQQLDYWSYRVISLGFIFLTIGILSGAVWANEAWGSYWSWDPKETWAFITWIVFAIYLHTRTKKNLQGANSAIVATLGFLIIWICYFGVNLLGIGLHSYGSFTLTSS.

8 consecutive transmembrane segments (helical) span residues 9–29 (ILTH…LITL), 44–64 (GMIA…IYSG), 71–91 (LYES…VPYF), 98–118 (LTTI…SGLL), 143–163 (MILS…LLVI), 226–246 (VISL…VWAN), 253–273 (WSWD…AIYL), and 287–307 (AIVA…VNLL).

Belongs to the CcmF/CycK/Ccl1/NrfE/CcsA family. As to quaternary structure, may interact with Ccs1.

The protein localises to the plastid. It localises to the chloroplast thylakoid membrane. Required during biogenesis of c-type cytochromes (cytochrome c6 and cytochrome f) at the step of heme attachment. This Guizotia abyssinica (Niger) protein is Cytochrome c biogenesis protein CcsA.